Consider the following 49-residue polypeptide: Large ribosomal subunit protein bL33B (49 aa).

The protein belongs to the bacterial ribosomal protein bL33 family.

The protein is Large ribosomal subunit protein bL33B of Listeria welshimeri serovar 6b (strain ATCC 35897 / DSM 20650 / CCUG 15529 / CIP 8149 / NCTC 11857 / SLCC 5334 / V8).